We begin with the raw amino-acid sequence, 212 residues long: Superoxide dismutase [Fe] 1, chloroplastic (212 aa).

N-acetylalanine is present on Ala-2. Fe cation is bound by residues His-35, His-87, Asp-169, and His-173.

This sequence belongs to the iron/manganese superoxide dismutase family. As to quaternary structure, homodimer. Interacts with cpn20/cpn21. The cofactor is Fe cation.

It is found in the cell membrane. The protein resides in the plastid. Its subcellular location is the chloroplast membrane. The protein localises to the chloroplast stroma. It carries out the reaction 2 superoxide + 2 H(+) = H2O2 + O2. Activated by cpn20/cpn21. Functionally, destroys superoxide anion radicals which are normally produced within the cells and which are toxic to biological systems. The protein is Superoxide dismutase [Fe] 1, chloroplastic (FSD1) of Arabidopsis thaliana (Mouse-ear cress).